The following is a 301-amino-acid chain: Homoserine O-acetyltransferase (301 aa).

Catalysis depends on C142, which acts as the Acyl-thioester intermediate. 2 residues coordinate substrate: K163 and S192. Residue H235 is the Proton acceptor of the active site. The active site involves E237. A substrate-binding site is contributed by R249.

The protein belongs to the MetA family.

The protein resides in the cytoplasm. It carries out the reaction L-homoserine + acetyl-CoA = O-acetyl-L-homoserine + CoA. It participates in amino-acid biosynthesis; L-methionine biosynthesis via de novo pathway; O-acetyl-L-homoserine from L-homoserine: step 1/1. Functionally, transfers an acetyl group from acetyl-CoA to L-homoserine, forming acetyl-L-homoserine. This chain is Homoserine O-acetyltransferase, found in Novosphingobium aromaticivorans (strain ATCC 700278 / DSM 12444 / CCUG 56034 / CIP 105152 / NBRC 16084 / F199).